Consider the following 590-residue polypeptide: Aspartate--tRNA ligase (590 aa).

Glutamate 180 lines the L-aspartate pocket. The segment at 204–207 (QLFK) is aspartate. Arginine 226 lines the L-aspartate pocket. Residues 226 to 228 (RDE) and glutamine 235 each bind ATP. Histidine 454 is a binding site for L-aspartate. Glutamate 488 contributes to the ATP binding site. Arginine 495 is a binding site for L-aspartate. 540-543 (GFDR) lines the ATP pocket.

This sequence belongs to the class-II aminoacyl-tRNA synthetase family. Type 1 subfamily. In terms of assembly, homodimer.

The protein localises to the cytoplasm. The enzyme catalyses tRNA(Asp) + L-aspartate + ATP = L-aspartyl-tRNA(Asp) + AMP + diphosphate. In terms of biological role, catalyzes the attachment of L-aspartate to tRNA(Asp) in a two-step reaction: L-aspartate is first activated by ATP to form Asp-AMP and then transferred to the acceptor end of tRNA(Asp). The polypeptide is Aspartate--tRNA ligase (Clostridium kluyveri (strain NBRC 12016)).